The following is a 101-amino-acid chain: Large ribosomal subunit protein uL24 (101 aa).

Belongs to the universal ribosomal protein uL24 family. As to quaternary structure, part of the 50S ribosomal subunit.

In terms of biological role, one of two assembly initiator proteins, it binds directly to the 5'-end of the 23S rRNA, where it nucleates assembly of the 50S subunit. One of the proteins that surrounds the polypeptide exit tunnel on the outside of the subunit. This is Large ribosomal subunit protein uL24 from Jannaschia sp. (strain CCS1).